The chain runs to 322 residues: MSSEQVKDRAKAAIVGSLVADAATQPVHWVEDPNRLNEQLRNKSEPEFSSEWLNPRYRYDNGTFSIYGEQNYVLLKHLVENKGFNLKKYMDAYYRHFGPGTNYDQPQSRDRLPKQGPWRNEHITRALNKIQSGDQRSGTDVAECDSYAMITPLVAMYAGSGQLDSYVDHVVRVTLNNDRSVRTAQFFAKLLEHYILHGRDPEGFHKVLSHFPNDQYKRDWQTAYEERSMCNVDAVRKYGYGSSLPGNFQGALNCLTRNEDYVSSVRTTMRSGGCSAARSCGVGAWVAAQYGSQCIPSNWISRTLRGREVLEYASQIIRMMKR.

The protein belongs to the ADP-ribosylglycohydrolase family. J1 crystallin subfamily. As to expression, expressed in the rhopalia. Present in both the large and small eyes.

The chain is Crystallin J1B from Tripedalia cystophora (Jellyfish).